Consider the following 107-residue polypeptide: Putative ankyrin repeat protein L14 (107 aa).

ANK repeat units follow at residues 19–48 (DNNYVVRPTSIKVYIEVVKYLVSQGANIRA), 49–78 (DNDCAVRFASRNGHLEVVKYLVSLGANIRA), and 80–107 (NDCAVRWASRNGHLDVVEYLVSLGAVLS).

This chain is Putative ankyrin repeat protein L14, found in Acanthamoeba polyphaga (Amoeba).